The following is a 712-amino-acid chain: Protein TAPT1 homolog (712 aa).

The span at 1-21 (MNNVPSTSRENSRNPSESSSS) shows a compositional bias: low complexity. Disordered stretches follow at residues 1–22 (MNNV…SSSI) and 44–66 (ITMS…EIET). Helical transmembrane passes span 196–216 (FFYL…GALL), 222–242 (TSAE…SMLI), 305–325 (TCGH…LVIL), 379–399 (HIFA…NWNI), 402–422 (FTEM…VDWL), 470–490 (GFIP…TFTL), and 497–517 (IIFG…GVVM). Residues 596 to 619 (EIRRSTDRETAVSHLTARSDERTP) are compositionally biased toward basic and acidic residues. The interval 596 to 712 (EIRRSTDRET…MPEQGVQRIE (117 aa)) is disordered. A compositionally biased stretch (polar residues) spans 656–667 (TENNTNSNSEQA). Residues 675–692 (TAAPVTSSASTNTNATSS) show a composition bias toward low complexity.

This sequence belongs to the TAPT1 family.

The protein resides in the membrane. This is Protein TAPT1 homolog from Caenorhabditis elegans.